We begin with the raw amino-acid sequence, 436 residues long: 3-ketoacyl-CoA thiolase (436 aa).

C99 functions as the Acyl-thioester intermediate in the catalytic mechanism. Residues H392 and C422 each act as proton acceptor in the active site.

It belongs to the thiolase-like superfamily. Thiolase family. In terms of assembly, heterotetramer of two alpha chains (FadJ) and two beta chains (FadI).

The protein resides in the cytoplasm. It carries out the reaction an acyl-CoA + acetyl-CoA = a 3-oxoacyl-CoA + CoA. Its pathway is lipid metabolism; fatty acid beta-oxidation. Its function is as follows. Catalyzes the final step of fatty acid oxidation in which acetyl-CoA is released and the CoA ester of a fatty acid two carbons shorter is formed. The chain is 3-ketoacyl-CoA thiolase from Salmonella schwarzengrund (strain CVM19633).